The chain runs to 364 residues: Long-wave-sensitive opsin 1 (364 aa).

The Extracellular segment spans residues 1–52 (MTQRWGPQRLAGGQPHAGLEDSTRASIFTYTNSNATRGPFEGPNYHIAPRWV). Residue S22 is glycosylated (O-linked (GlcNAc) serine). N34 carries N-linked (GlcNAc...) asparagine glycosylation. Residues 53-77 (YHVTSAWMIFVVIASVFTNGLVLAA) form a helical membrane-spanning segment. Over 78 to 89 (TMKFKKLRHPLN) the chain is Cytoplasmic. The helical transmembrane segment at 90–115 (WILVNLAVADLAETIIASTISVVNQI) threads the bilayer. The Extracellular portion of the chain corresponds to 116-129 (YGYFVLGHPMCVLE). An intrachain disulfide couples C126 to C203. A helical membrane pass occupies residues 130–149 (GYTVSLCGITGLWSLAIISW). Residues 150 to 168 (ERWLVVCKPFGNVRFDAKL) lie on the Cytoplasmic side of the membrane. A helical transmembrane segment spans residues 169 to 192 (AIAGIAFSWIWAAVWTAPPIFGWS). Topologically, residues 193–218 (RYWPHGLKTSCGPDVFSGSSYPGVQS) are extracellular. The chain crosses the membrane as a helical span at residues 219 to 246 (YMIVLMITCCIIPLSVIVLCYLQVWLAI). Over 247–268 (RAVAKQQKESESTQKAEKEVTR) the chain is Cytoplasmic. The chain crosses the membrane as a helical span at residues 269–292 (MVMVMIFAYCVCWGPYTFFACFAA). Over 293 to 300 (AHPGYAFH) the chain is Extracellular. Residues 301–325 (PLVAALPAYFAKSATIYNPIIYVFM) form a helical membrane-spanning segment. The residue at position 312 (K312) is an N6-(retinylidene)lysine. The Cytoplasmic portion of the chain corresponds to 326-364 (NRQFRNCIMQLFGKKVDDGSELSSASRTEASSVSSVSPA).

It belongs to the G-protein coupled receptor 1 family. Opsin subfamily. Post-translationally, phosphorylated on some or all of the serine and threonine residues present in the C-terminal region. The three color pigments are found in the cone photoreceptor cells. Expressed in retina.

The protein resides in the membrane. Functionally, visual pigments are the light-absorbing molecules that mediate vision. They consist of an apoprotein, opsin, covalently linked to cis-retinal. This is Long-wave-sensitive opsin 1 (OPN1LW) from Felis catus (Cat).